Here is a 240-residue protein sequence, read N- to C-terminus: Large ribosomal subunit protein bL25 (240 aa).

The segment at 1-24 (MATVMEFKATARPKSGKGAARAER) is disordered.

Belongs to the bacterial ribosomal protein bL25 family. CTC subfamily. In terms of assembly, part of the 50S ribosomal subunit; part of the 5S rRNA/L5/L18/L25 subcomplex. Contacts the 5S rRNA. Binds to the 5S rRNA independently of L5 and L18.

Functionally, this is one of the proteins that binds to the 5S RNA in the ribosome where it forms part of the central protuberance. In Rhodopseudomonas palustris (strain HaA2), this protein is Large ribosomal subunit protein bL25.